A 760-amino-acid polypeptide reads, in one-letter code: Xaa-Pro dipeptidyl-peptidase (760 aa).

Residues S349, D469, and H499 each act as charge relay system in the active site.

This sequence belongs to the peptidase S15 family. Homodimer.

It localises to the cytoplasm. The enzyme catalyses Hydrolyzes Xaa-Pro-|- bonds to release unblocked, N-terminal dipeptides from substrates including Ala-Pro-|-p-nitroanilide and (sequentially) Tyr-Pro-|-Phe-Pro-|-Gly-Pro-|-Ile.. Removes N-terminal dipeptides sequentially from polypeptides having unsubstituted N-termini provided that the penultimate residue is proline. The chain is Xaa-Pro dipeptidyl-peptidase from Streptococcus pyogenes serotype M3 (strain ATCC BAA-595 / MGAS315).